The following is a 107-amino-acid chain: L-rhamnose mutarotase (107 aa).

Position 21 (Y21) interacts with substrate. The Proton donor role is filled by H25. Residues Y44 and 79-80 (WW) contribute to the substrate site. The tract at residues 88–107 (ETNPDNSPKTNSLKEVFHLD) is disordered. Polar residues predominate over residues 90 to 100 (NPDNSPKTNSL).

Belongs to the rhamnose mutarotase family. As to quaternary structure, homodimer.

Its subcellular location is the cytoplasm. The catalysed reaction is alpha-L-rhamnose = beta-L-rhamnose. The protein operates within carbohydrate metabolism; L-rhamnose metabolism. Involved in the anomeric conversion of L-rhamnose. The chain is L-rhamnose mutarotase from Flavobacterium johnsoniae (strain ATCC 17061 / DSM 2064 / JCM 8514 / BCRC 14874 / CCUG 350202 / NBRC 14942 / NCIMB 11054 / UW101) (Cytophaga johnsonae).